The primary structure comprises 38 residues: Large ribosomal subunit protein bL36 (38 aa).

The protein belongs to the bacterial ribosomal protein bL36 family.

The chain is Large ribosomal subunit protein bL36 from Fervidobacterium nodosum (strain ATCC 35602 / DSM 5306 / Rt17-B1).